The chain runs to 1079 residues: Isoleucine--tRNA ligase (1079 aa).

The 'HIGH' region motif lies at Pro-53–His-63. Positions Lys-611–Arg-615 match the 'KMSKS' region motif. Lys-614 is an ATP binding site.

This sequence belongs to the class-I aminoacyl-tRNA synthetase family. IleS type 2 subfamily. As to quaternary structure, monomer. The cofactor is Zn(2+).

It is found in the cytoplasm. The enzyme catalyses tRNA(Ile) + L-isoleucine + ATP = L-isoleucyl-tRNA(Ile) + AMP + diphosphate. In terms of biological role, catalyzes the attachment of isoleucine to tRNA(Ile). As IleRS can inadvertently accommodate and process structurally similar amino acids such as valine, to avoid such errors it has two additional distinct tRNA(Ile)-dependent editing activities. One activity is designated as 'pretransfer' editing and involves the hydrolysis of activated Val-AMP. The other activity is designated 'posttransfer' editing and involves deacylation of mischarged Val-tRNA(Ile). In Rickettsia canadensis (strain McKiel), this protein is Isoleucine--tRNA ligase.